The following is a 710-amino-acid chain: Iron-sulfur clusters transporter ATM1, mitochondrial (710 aa).

The N-terminal 38 residues, 1-38, are a transit peptide targeting the mitochondrion; that stretch reads MWLSLPRSGYGSVATLTSKRVLACLTPLRQFSTSPAVS. A compositionally biased stretch (polar residues) spans 35 to 52; it reads PAVSNANHKNVDNINKSP. The disordered stretch occupies residues 35-83; sequence PAVSNANHKNVDNINKSPANDAANNAVEKGDKPTTSPEKLATKAEKSSA. The Mitochondrial matrix portion of the chain corresponds to 39–129; that stretch reads NANHKNVDNI…PKGKTSVKFR (91 aa). Residues 130 to 151 form a helical membrane-spanning segment; sequence VLVAVALLVGAKLLNVQVPFFF. One can recognise an ABC transmembrane type-1 domain in the interval 130 to 419; it reads VLVAVALLVG…LGSVYRDLRQ (290 aa). Residues 152-173 lie on the Mitochondrial intermembrane side of the membrane; it reads KEIIDDMNIEWNSATALGVGIT. A helical transmembrane segment spans residues 174–197; that stretch reads ALIFSYGAARFGAVLFGELRNAIF. At 198-246 the chain is on the mitochondrial matrix side; sequence ASVAQKAIKEVATNVFRHLLKLDMAFHLSRQTGGITRAIDRGTKGISFV. Residues 247-270 form a helical membrane-spanning segment; the sequence is LSSMVFHIIPIALEISLVCGILSY. Asn271 is a topological domain (mitochondrial intermembrane). Residues 272-292 form a helical membrane-spanning segment; it reads FGWKYALVTGATMVSYAIFTI. Residues 293 to 358 lie on the Mitochondrial matrix side of the membrane; that stretch reads TTTSWRTKFR…ASIKIATSLA (66 aa). Residues 298–302 and 361–364 contribute to the glutathione site; these read RTKFR and NSGQ. Residues 359–377 traverse the membrane as a helical segment; the sequence is FLNSGQNLIFSSALTAMMY. The Mitochondrial intermembrane portion of the chain corresponds to 378–392; the sequence is MTCCGVADGSLTVGD. A helical membrane pass occupies residues 393-414; that stretch reads LVLVNQLVFQLSVPLNFLGSVY. Gly411 lines the glutathione pocket. Residues 415-710 are Mitochondrial matrix-facing; sequence RDLRQSLLDM…AEEKAAKKDV (296 aa). In terms of domain architecture, ABC transporter spans 453–687; it reads IRFENVTYGY…DGLYKSMWDA (235 aa). ATP is bound by residues Tyr462 and 486 to 497; that span reads GPSGSGKSTILK.

This sequence belongs to the ABC transporter superfamily. ABCB family. Heavy Metal importer (TC 3.A.1.210) subfamily. Homodimer.

Its subcellular location is the mitochondrion inner membrane. Functionally, performs an essential function in the generation of cytoplasmic iron-sulfur proteins by mediating the ATP-dependent export of Fe/S cluster precursors synthesized by NFS1 and other mitochondrial proteins. Hydrolyzes ATP. Binds glutathione and may function by transporting a glutathione-conjugated iron-sulfur compound. The chain is Iron-sulfur clusters transporter ATM1, mitochondrial from Yarrowia lipolytica (strain CLIB 122 / E 150) (Yeast).